The sequence spans 475 residues: Ribulose bisphosphate carboxylase large chain (475 aa).

Substrate is bound by residues N123 and T173. K175 acts as the Proton acceptor in catalysis. A substrate-binding site is contributed by K177. Residues K201, D203, and E204 each contribute to the Mg(2+) site. An N6-carboxylysine modification is found at K201. Residue H294 is the Proton acceptor of the active site. 3 residues coordinate substrate: R295, H327, and S379.

It belongs to the RuBisCO large chain family. Type I subfamily. As to quaternary structure, heterohexadecamer of 8 large chains and 8 small chains. Mg(2+) is required as a cofactor.

The protein resides in the plastid. Its subcellular location is the chloroplast. The catalysed reaction is 2 (2R)-3-phosphoglycerate + 2 H(+) = D-ribulose 1,5-bisphosphate + CO2 + H2O. It carries out the reaction D-ribulose 1,5-bisphosphate + O2 = 2-phosphoglycolate + (2R)-3-phosphoglycerate + 2 H(+). Its function is as follows. RuBisCO catalyzes two reactions: the carboxylation of D-ribulose 1,5-bisphosphate, the primary event in carbon dioxide fixation, as well as the oxidative fragmentation of the pentose substrate in the photorespiration process. Both reactions occur simultaneously and in competition at the same active site. The polypeptide is Ribulose bisphosphate carboxylase large chain (Bigelowiella natans (Pedinomonas minutissima)).